We begin with the raw amino-acid sequence, 166 residues long: Flagellar protein LafL (166 aa).

A helical transmembrane segment spans residues 6–26 (MIAMFIAMIITSALVSAATIM).

It belongs to the FliL family.

The protein resides in the cell inner membrane. Functionally, controls the rotational direction of flagella during chemotaxis. In Vibrio parahaemolyticus serotype O3:K6 (strain RIMD 2210633), this protein is Flagellar protein LafL (lafL).